The primary structure comprises 325 residues: Melanocortin receptor 5 (325 aa).

At 1-37 (MNSSFHLHFLDLGLNATEGNLSGLSVRNASSPCEDMG) the chain is on the extracellular side. N-linked (GlcNAc...) asparagine glycans are attached at residues N2, N15, N20, and N28. A helical transmembrane segment spans residues 38 to 61 (IAVEVFLALGLISLLENILVIGAI). At 62–73 (VRNRNLHIPMYF) the chain is on the cytoplasmic side. A helical transmembrane segment spans residues 74-97 (FVGSLAVADMLVSLSNFWETITIY). Residues 98 to 114 (LLTNKHLVMADASVRHL) lie on the Extracellular side of the membrane. The chain crosses the membrane as a helical span at residues 115 to 138 (DNVFDSMICISVVASMCSLLAIAV). Over 139-155 (DRYVTIFCRLRYQRIMT) the chain is Cytoplasmic. Residues 156–179 (GRRSGAIIAGIWAFCTSCGTVFIV) form a helical membrane-spanning segment. At 180-186 (YYESTYV) the chain is on the extracellular side. Residues 187 to 211 (VVCLIAMFLTMLLLMASLYTHMFLL) form a helical membrane-spanning segment. Residues 212 to 239 (ARTHVRRIAALPGHSSVRQRTGVKGAIT) lie on the Cytoplasmic side of the membrane. The chain crosses the membrane as a helical span at residues 240 to 265 (LAMLLGVFIICWAPFFLHLILMISCP). Topologically, residues 266-273 (QNLYCSCF) are extracellular. The chain crosses the membrane as a helical span at residues 274–297 (MSHFNMYLILIMCNSVIDPLIYAF). Topologically, residues 298 to 325 (RSQEMRKTFKEIVCFQGFRTPCRFPSTY) are cytoplasmic. The S-palmitoyl cysteine moiety is linked to residue C311.

It belongs to the G-protein coupled receptor 1 family.

Its subcellular location is the cell membrane. Its function is as follows. Receptor for MSH (alpha, beta and gamma) and ACTH. The activity of this receptor is mediated by G proteins which activate adenylate cyclase. This receptor is a possible mediator of the immunomodulation properties of melanocortins. This is Melanocortin receptor 5 (MC5R) from Ovis aries (Sheep).